A 53-amino-acid polypeptide reads, in one-letter code: uncharacterized protein (53 aa).

The protein resides in the plastid. It is found in the chloroplast. This is an uncharacterized protein from Guillardia theta (Cryptophyte).